The sequence spans 747 residues: ESX-1 secretion system protein EccCa1 (747 aa).

3 helical membrane passes run I41 to G61, L65 to A85, and F222 to I242. The region spanning G456–K665 is the FtsK domain. An ATP-binding site is contributed by G479–S486.

In terms of assembly, part of the ESX-1 / type VII secretion system (T7SS), which is composed of cytosolic and membrane components. The ESX-1 membrane complex is composed of EccB1, EccCa1, EccCb1, EccD1 and EccE1.

It is found in the cell inner membrane. Its function is as follows. Part of the ESX-1 specialized secretion system, which delivers several virulence factors to host cells during infection, including the key virulence factors EsxA (ESAT-6) and EsxB (CFP-10). This is ESX-1 secretion system protein EccCa1 from Mycobacterium tuberculosis (strain CDC 1551 / Oshkosh).